A 312-amino-acid chain; its full sequence is Bifunctional pinoresinol-lariciresinol reductase 2 (312 aa).

NADP(+)-binding positions include 11-17 (GGTGYIG), arginine 36, and lysine 45. Catalysis depends on lysine 138, which acts as the Proton acceptor. Arginine 142 is an NADP(+) binding site. Histidine 270 is a binding site for substrate.

The protein belongs to the NmrA-type oxidoreductase family. Isoflavone reductase subfamily. As to quaternary structure, dimer.

It carries out the reaction (+)-lariciresinol + NADP(+) = (+)-pinoresinol + NADPH + H(+). The catalysed reaction is (-)-secoisolariciresinol + NADP(+) = (+)-lariciresinol + NADPH + H(+). It catalyses the reaction (-)-lariciresinol + NADP(+) = (-)-pinoresinol + NADPH + H(+). Functionally, reductase involved in lignan biosynthesis. Catalyzes the enantioselective sequential conversion of (+)-pinoresinol into (+)-lariciresinol and of (+)-lariciresinol into (-)-secoisolariciresinol. Can also convert with a lower efficiency (-)-pinoresinol into (-)-lariciresinol, but not (-)-lariciresinol into (+)-secoisolariciresinol. Abstracts the 4R-hydride from the NADPH cofactor during catalysis. The protein is Bifunctional pinoresinol-lariciresinol reductase 2 (PLR_Tp2) of Thuja plicata (Western red-cedar).